The primary structure comprises 663 residues: UvrABC system protein B (663 aa).

Basic and acidic residues predominate over residues 1–10 (MIDKRDDKPF). The disordered stretch occupies residues 1 to 23 (MIDKRDDKPFKLKSKYKPSGDQP). The Helicase ATP-binding domain occupies 31–418 (DNIEGGEKAQ…TNTIIEQIIR (388 aa)). 44-51 (GATGTGKT) lines the ATP pocket. The Beta-hairpin signature appears at 97–120 (YYDYYQPEAYVPSSDTYIEKDSSV). Positions 435 to 601 (QMDDLLGEIN…TIKKDIRGLI (167 aa)) constitute a Helicase C-terminal domain. Positions 627 to 662 (KEAINALQKQMQEAAELLDFELAAQMRDLILELKLM) constitute a UVR domain.

This sequence belongs to the UvrB family. As to quaternary structure, forms a heterotetramer with UvrA during the search for lesions. Interacts with UvrC in an incision complex.

The protein resides in the cytoplasm. Its function is as follows. The UvrABC repair system catalyzes the recognition and processing of DNA lesions. A damage recognition complex composed of 2 UvrA and 2 UvrB subunits scans DNA for abnormalities. Upon binding of the UvrA(2)B(2) complex to a putative damaged site, the DNA wraps around one UvrB monomer. DNA wrap is dependent on ATP binding by UvrB and probably causes local melting of the DNA helix, facilitating insertion of UvrB beta-hairpin between the DNA strands. Then UvrB probes one DNA strand for the presence of a lesion. If a lesion is found the UvrA subunits dissociate and the UvrB-DNA preincision complex is formed. This complex is subsequently bound by UvrC and the second UvrB is released. If no lesion is found, the DNA wraps around the other UvrB subunit that will check the other stand for damage. The polypeptide is UvrABC system protein B (Streptococcus pyogenes serotype M1).